Reading from the N-terminus, the 504-residue chain is ATP synthase subunit alpha (504 aa).

169 to 176 serves as a coordination point for ATP; that stretch reads GDRQTGKT.

This sequence belongs to the ATPase alpha/beta chains family. In terms of assembly, F-type ATPases have 2 components, CF(1) - the catalytic core - and CF(0) - the membrane proton channel. CF(1) has five subunits: alpha(3), beta(3), gamma(1), delta(1), epsilon(1). CF(0) has three main subunits: a(1), b(2) and c(9-12). The alpha and beta chains form an alternating ring which encloses part of the gamma chain. CF(1) is attached to CF(0) by a central stalk formed by the gamma and epsilon chains, while a peripheral stalk is formed by the delta and b chains.

It is found in the cell membrane. The enzyme catalyses ATP + H2O + 4 H(+)(in) = ADP + phosphate + 5 H(+)(out). Functionally, produces ATP from ADP in the presence of a proton gradient across the membrane. The alpha chain is a regulatory subunit. The chain is ATP synthase subunit alpha from Clostridium botulinum (strain Langeland / NCTC 10281 / Type F).